Consider the following 738-residue polypeptide: Polyphosphate kinase (738 aa).

The segment at 1–48 (MIGNDRWVTEIETGPVTEARPDTNAREPGDRTPAAPPAATPAATTDQL) is disordered. Basic and acidic residues predominate over residues 19 to 30 (ARPDTNAREPGD). Asparagine 91 contributes to the ATP binding site. Positions 427 and 457 each coordinate Mg(2+). Histidine 487 serves as the catalytic Phosphohistidine intermediate. 3 residues coordinate ATP: tyrosine 520, arginine 620, and histidine 648.

It belongs to the polyphosphate kinase 1 (PPK1) family. It depends on Mg(2+) as a cofactor. An intermediate of this reaction is the autophosphorylated ppk in which a phosphate is covalently linked to a histidine residue through a N-P bond.

It catalyses the reaction [phosphate](n) + ATP = [phosphate](n+1) + ADP. Catalyzes the reversible transfer of the terminal phosphate of ATP to form a long-chain polyphosphate (polyP). This is Polyphosphate kinase from Mycobacterium marinum (strain ATCC BAA-535 / M).